The sequence spans 134 residues: Small ribosomal subunit protein uS11 (134 aa).

The protein belongs to the universal ribosomal protein uS11 family. As to quaternary structure, part of the 30S ribosomal subunit. Interacts with proteins S7 and S18. Binds to IF-3.

Its function is as follows. Located on the platform of the 30S subunit, it bridges several disparate RNA helices of the 16S rRNA. Forms part of the Shine-Dalgarno cleft in the 70S ribosome. This is Small ribosomal subunit protein uS11 from Frankia casuarinae (strain DSM 45818 / CECT 9043 / HFP020203 / CcI3).